The chain runs to 300 residues: Porphobilinogen deaminase (300 aa).

Cysteine 242 carries the post-translational modification S-(dipyrrolylmethanemethyl)cysteine.

The protein belongs to the HMBS family. In terms of assembly, monomer. It depends on dipyrromethane as a cofactor.

It catalyses the reaction 4 porphobilinogen + H2O = hydroxymethylbilane + 4 NH4(+). It functions in the pathway porphyrin-containing compound metabolism; protoporphyrin-IX biosynthesis; coproporphyrinogen-III from 5-aminolevulinate: step 2/4. In terms of biological role, tetrapolymerization of the monopyrrole PBG into the hydroxymethylbilane pre-uroporphyrinogen in several discrete steps. In Rickettsia bellii (strain OSU 85-389), this protein is Porphobilinogen deaminase.